Here is a 520-residue protein sequence, read N- to C-terminus: Maturase K (520 aa).

This sequence belongs to the intron maturase 2 family. MatK subfamily.

It localises to the plastid. Its subcellular location is the chloroplast. Functionally, usually encoded in the trnK tRNA gene intron. Probably assists in splicing its own and other chloroplast group II introns. This is Maturase K from Cycas taitungensis (Prince sago).